Reading from the N-terminus, the 354-residue chain is Fusarinine C esterase sidJ (354 aa).

The protein belongs to the sidJ hydrolase family. In terms of assembly, homodimer.

The catalysed reaction is fusarinine C + 3 H2O = 3 fusarinine + Fe(3+). In terms of biological role, displays specific fusarinine C (FsC) esterase activity but does not hydrolyze triacetylfusarinine C (TAFC), which has the same core structure as fusarinine C. Both extra- and intracellular siderophores have been shown to be crucial for the virulence. Subsequent to chelation of iron and uptake, FsC and TAFC are hydrolyzed and the iron is transferred to the metabolism or to the intracellular siderophore ferricrocin (FC) for transport and storage of iron. The polypeptide is Fusarinine C esterase sidJ (Aspergillus fumigatus (strain ATCC MYA-4609 / CBS 101355 / FGSC A1100 / Af293) (Neosartorya fumigata)).